The sequence spans 483 residues: Glutamyl-tRNA(Gln) amidotransferase subunit A (483 aa).

Residues Lys-76 and Ser-151 each act as charge relay system in the active site. Residue Ser-175 is the Acyl-ester intermediate of the active site.

Belongs to the amidase family. GatA subfamily. In terms of assembly, heterotrimer of A, B and C subunits.

The enzyme catalyses L-glutamyl-tRNA(Gln) + L-glutamine + ATP + H2O = L-glutaminyl-tRNA(Gln) + L-glutamate + ADP + phosphate + H(+). Its function is as follows. Allows the formation of correctly charged Gln-tRNA(Gln) through the transamidation of misacylated Glu-tRNA(Gln) in organisms which lack glutaminyl-tRNA synthetase. The reaction takes place in the presence of glutamine and ATP through an activated gamma-phospho-Glu-tRNA(Gln). This Nitrosococcus oceani (strain ATCC 19707 / BCRC 17464 / JCM 30415 / NCIMB 11848 / C-107) protein is Glutamyl-tRNA(Gln) amidotransferase subunit A.